Here is a 58-residue protein sequence, read N- to C-terminus: Small ribosomal subunit protein bS21 (58 aa).

A disordered region spans residues 39-58; that stretch reads DKPSVKKRAKSKAAAKYRSR. Residues 43–58 are compositionally biased toward basic residues; sequence VKKRAKSKAAAKYRSR.

This sequence belongs to the bacterial ribosomal protein bS21 family.

This chain is Small ribosomal subunit protein bS21, found in Chlamydia abortus (strain DSM 27085 / S26/3) (Chlamydophila abortus).